The primary structure comprises 304 residues: Recombination-associated protein RdgC (304 aa).

Belongs to the RdgC family.

The protein resides in the cytoplasm. It is found in the nucleoid. Its function is as follows. May be involved in recombination. The protein is Recombination-associated protein RdgC of Dechloromonas aromatica (strain RCB).